Reading from the N-terminus, the 422-residue chain is uncharacterized protein (422 aa).

Belongs to the N(4)/N(6)-methyltransferase family.

It carries out the reaction a 2'-deoxyadenosine in DNA + S-adenosyl-L-methionine = an N(6)-methyl-2'-deoxyadenosine in DNA + S-adenosyl-L-homocysteine + H(+). This is an uncharacterized protein from Mycoplasma pneumoniae (strain ATCC 29342 / M129 / Subtype 1) (Mycoplasmoides pneumoniae).